Reading from the N-terminus, the 157-residue chain is Endoribonuclease YbeY (157 aa).

Residues histidine 115, histidine 119, and histidine 125 each coordinate Zn(2+).

The protein belongs to the endoribonuclease YbeY family. It depends on Zn(2+) as a cofactor.

It localises to the cytoplasm. In terms of biological role, single strand-specific metallo-endoribonuclease involved in late-stage 70S ribosome quality control and in maturation of the 3' terminus of the 16S rRNA. This Micrococcus luteus (strain ATCC 4698 / DSM 20030 / JCM 1464 / CCM 169 / CCUG 5858 / IAM 1056 / NBRC 3333 / NCIMB 9278 / NCTC 2665 / VKM Ac-2230) (Micrococcus lysodeikticus) protein is Endoribonuclease YbeY.